A 104-amino-acid chain; its full sequence is DNA-directed RNA polymerase subunit omega (104 aa).

The disordered stretch occupies residues V60–I104. Residues P63 to I104 are compositionally biased toward basic and acidic residues.

The protein belongs to the RNA polymerase subunit omega family. As to quaternary structure, the RNAP catalytic core consists of 2 alpha, 1 beta, 1 beta' and 1 omega subunit. When a sigma factor is associated with the core the holoenzyme is formed, which can initiate transcription.

It catalyses the reaction RNA(n) + a ribonucleoside 5'-triphosphate = RNA(n+1) + diphosphate. In terms of biological role, promotes RNA polymerase assembly. Latches the N- and C-terminal regions of the beta' subunit thereby facilitating its interaction with the beta and alpha subunits. The protein is DNA-directed RNA polymerase subunit omega of Streptococcus sanguinis (strain SK36).